The primary structure comprises 571 residues: Alpha-1D adrenergic receptor (571 aa).

The Extracellular segment spans residues 1–94; sequence MTFRDLLSVN…AVGGLVVSAQ (94 aa). The segment at 13–75 is disordered; that stretch reads GSRSDGSAGG…SSAGEPGAAG (63 aa). Residues 19-34 show a composition bias toward gly residues; the sequence is SAGGASAGGSGGGSGG. Residues 35-47 are compositionally biased toward low complexity; it reads AAASEGRAVDGVP. Positions 48–57 are enriched in gly residues; sequence GTAGSGGVVG. Asparagine 64 and asparagine 81 each carry an N-linked (GlcNAc...) asparagine glycan. Residues 95–120 form a helical membrane-spanning segment; the sequence is GVGVGVFLAAFILMAVAGNLLVILSV. The Cytoplasmic portion of the chain corresponds to 121-132; that stretch reads ACNRHLQTVTNY. Residues 133–158 traverse the membrane as a helical segment; the sequence is FIVNLAVADLLLSATVLPFSATMEVL. Topologically, residues 159–168 are extracellular; sequence GFWAFGRAFC. Residues 169–191 form a helical membrane-spanning segment; it reads DVWAAVDVLCCTASILSLCTISV. The Cytoplasmic segment spans residues 192 to 212; sequence DRYVGVRHSLKYPSIMTERKA. A helical transmembrane segment spans residues 213 to 237; it reads AAILALLWAVAIVVSVGPLLGWKEP. Residues 238-250 are Extracellular-facing; the sequence is VPPDERFCGITEE. The chain crosses the membrane as a helical span at residues 251-274; it reads AGYAVFSSLCSFYLPMAVIVVMYC. Residues 275 to 348 are Cytoplasmic-facing; it reads RVYVVARSTT…KFSREKKAAK (74 aa). The helical transmembrane segment at 349-373 threads the bilayer; the sequence is TLAIVVGVFVLCWFPFFFVLPLGSL. Residues 374–380 lie on the Extracellular side of the membrane; the sequence is FPQLKPS. A helical membrane pass occupies residues 381–405; it reads EGVFKVIFWLGYFNSCVNPLIYPCS. The Cytoplasmic segment spans residues 406–571; that stretch reads SREFKRAFLR…DYSHLRETDI (166 aa). Cysteine 419 is lipidated: S-palmitoyl cysteine. Positions 465–487 are disordered; that stretch reads LPAPEATDTPSAPEAQAPVVGRR.

It belongs to the G-protein coupled receptor 1 family. Adrenergic receptor subfamily. ADRA1D sub-subfamily. In terms of assembly, interacts with FLNA (via filamin repeat 21); increases PKA-mediated phosphorylation of FLNA. Post-translationally, palmitoylated. Palmitoylation by ZDHHC21 may increase the expression of the receptor and regulate downstream signaling.

It localises to the cell membrane. In terms of biological role, this alpha-adrenergic receptor mediates its effect through the influx of extracellular calcium. This Sus scrofa (Pig) protein is Alpha-1D adrenergic receptor (ADRA1D).